The sequence spans 229 residues: Ras-like protein rasV (229 aa).

Gly40–Thr47 contacts GTP. The short motif at Tyr62–Tyr70 is the Effector region element. Residues Asp87–Gln91 and Asn146–Asp149 contribute to the GTP site. Cysteine methyl ester is present on Cys226. Cys226 is lipidated: S-geranylgeranyl cysteine. Positions Lys227 to Met229 are cleaved as a propeptide — removed in mature form.

This sequence belongs to the small GTPase superfamily. Ras family.

Its subcellular location is the cell membrane. It carries out the reaction GTP + H2O = GDP + phosphate + H(+). In terms of biological role, ras proteins bind GDP/GTP and possess intrinsic GTPase activity. The protein is Ras-like protein rasV (rasV) of Dictyostelium discoideum (Social amoeba).